The primary structure comprises 713 residues: Cytosolic endo-beta-N-acetylglucosaminidase (713 aa).

Positions 1-36 (MIARKRKSNGSETTSGKIPKDDVSSESCLDQPADES) are disordered. In terms of domain architecture, BRCT spans 270–362 (FFDACDGFFT…DFRQNQDKFW (93 aa)).

The protein belongs to the glycosyl hydrolase 85 family.

The protein resides in the cytoplasm. The protein localises to the cytosol. It catalyses the reaction an N(4)-(oligosaccharide-(1-&gt;3)-[oligosaccharide-(1-&gt;6)]-beta-D-Man-(1-&gt;4)-beta-D-GlcNAc-(1-&gt;4)-alpha-D-GlcNAc)-L-asparaginyl-[protein] + H2O = an oligosaccharide-(1-&gt;3)-[oligosaccharide-(1-&gt;6)]-beta-D-Man-(1-&gt;4)-D-GlcNAc + N(4)-(N-acetyl-beta-D-glucosaminyl)-L-asparaginyl-[protein]. Its function is as follows. Endoglycosidase that releases N-glycans from glycoproteins by cleaving the beta-1,4-glycosidic bond in the N,N'-diacetylchitobiose core. Involved in the processing of free oligosaccharides in the cytosol. The sequence is that of Cytosolic endo-beta-N-acetylglucosaminidase (engase) from Danio rerio (Zebrafish).